A 403-amino-acid chain; its full sequence is Phosphoglycerate kinase (403 aa).

Substrate-binding positions include 21 to 23 (DFN), Arg-36, 59 to 62 (HLGR), Arg-119, and Arg-159. ATP contacts are provided by residues Lys-214, Gly-301, Glu-332, and 359–362 (GGDS).

This sequence belongs to the phosphoglycerate kinase family. As to quaternary structure, monomer.

It is found in the cytoplasm. It catalyses the reaction (2R)-3-phosphoglycerate + ATP = (2R)-3-phospho-glyceroyl phosphate + ADP. It participates in carbohydrate degradation; glycolysis; pyruvate from D-glyceraldehyde 3-phosphate: step 2/5. The polypeptide is Phosphoglycerate kinase (Lactobacillus acidophilus (strain ATCC 700396 / NCK56 / N2 / NCFM)).